Consider the following 285-residue polypeptide: Energy-coupling factor transporter ATP-binding protein EcfA2 (285 aa).

The 243-residue stretch at 3 to 245 (IKFKKVDYIY…RKWLKKHNLS (243 aa)) folds into the ABC transporter domain. 40–47 (GHTGSGKS) is an ATP binding site.

The protein belongs to the ABC transporter superfamily. Energy-coupling factor EcfA family. In terms of assembly, forms a stable energy-coupling factor (ECF) transporter complex composed of 2 membrane-embedded substrate-binding proteins (S component), 2 ATP-binding proteins (A component) and 2 transmembrane proteins (T component).

It is found in the cell membrane. In terms of biological role, ATP-binding (A) component of a common energy-coupling factor (ECF) ABC-transporter complex. Unlike classic ABC transporters this ECF transporter provides the energy necessary to transport a number of different substrates. The sequence is that of Energy-coupling factor transporter ATP-binding protein EcfA2 from Lactobacillus acidophilus (strain ATCC 700396 / NCK56 / N2 / NCFM).